The primary structure comprises 208 residues: Pectinesterase inhibitor 6 (208 aa).

The first 30 residues, 1–30, serve as a signal peptide directing secretion; sequence MTSSSSSPITFTLLLLLSLLVALNPNPSLA. C53 and C62 are joined by a disulfide. N54 and N75 each carry an N-linked (GlcNAc...) asparagine glycan. A disulfide bridge connects residues C118 and C165.

It belongs to the PMEI family.

Its subcellular location is the secreted. The protein localises to the extracellular space. It is found in the apoplast. Functionally, pectin methylesterase (PME) inhibitor that targets PME from seeds and modulates PME activity and pectin methylesterification during seed germination. Promotes mucilage release by limiting methylesterification of homogalacturonan in seed coat epidermal cells. This is Pectinesterase inhibitor 6 from Arabidopsis thaliana (Mouse-ear cress).